The following is a 467-amino-acid chain: Asparagine--tRNA ligase (467 aa).

Belongs to the class-II aminoacyl-tRNA synthetase family. Homodimer.

Its subcellular location is the cytoplasm. The catalysed reaction is tRNA(Asn) + L-asparagine + ATP = L-asparaginyl-tRNA(Asn) + AMP + diphosphate + H(+). The polypeptide is Asparagine--tRNA ligase (Actinobacillus succinogenes (strain ATCC 55618 / DSM 22257 / CCUG 43843 / 130Z)).